Here is a 658-residue protein sequence, read N- to C-terminus: Threonine--tRNA ligase (658 aa).

A TGS domain is found at 1–64 (MSFSISLSFP…EQSGQVEIIT (64 aa)). The tract at residues 246-549 (DHRRLGREMD…LIENFAGHMP (304 aa)) is catalytic. Residues C343, H394, and H526 each contribute to the Zn(2+) site.

Belongs to the class-II aminoacyl-tRNA synthetase family. As to quaternary structure, homodimer. Zn(2+) is required as a cofactor.

It is found in the cytoplasm. It catalyses the reaction tRNA(Thr) + L-threonine + ATP = L-threonyl-tRNA(Thr) + AMP + diphosphate + H(+). Catalyzes the attachment of threonine to tRNA(Thr) in a two-step reaction: L-threonine is first activated by ATP to form Thr-AMP and then transferred to the acceptor end of tRNA(Thr). Also edits incorrectly charged L-seryl-tRNA(Thr). The polypeptide is Threonine--tRNA ligase (Bartonella bacilliformis (strain ATCC 35685 / KC583 / Herrer 020/F12,63)).